We begin with the raw amino-acid sequence, 609 residues long: Putative pectinesterase/pectinesterase inhibitor 45 (609 aa).

A helical membrane pass occupies residues 25 to 45 (IILGVVSVLVVAAAIIGGAFA). 10 N-linked (GlcNAc...) asparagine glycosylation sites follow: N51, N62, N100, N114, N183, N229, N296, N306, N346, and N362. The tract at residues 54–87 (QEQGKTTNNKSKDSPTKSESPSPKPPSSAAQTVK) is disordered. Residues 89–241 (GQVDKIIQTL…QVLTSNSLAM (153 aa)) form a pectinesterase inhibitor 45 region. Residues 296 to 593 (NATVAKDGSG…FTVGPFLQGE (298 aa)) are pectinesterase 45. Substrate is bound by residues T371 and Q401. D424 (proton donor; for pectinesterase activity) is an active-site residue. A disulfide bridge links C438 with C458. D445 (nucleophile; for pectinesterase activity) is an active-site residue. N491 carries N-linked (GlcNAc...) asparagine glycosylation. Substrate-binding residues include R513 and W515.

This sequence in the N-terminal section; belongs to the PMEI family. The protein in the C-terminal section; belongs to the pectinesterase family. Expressed in flower buds and pollen.

The protein resides in the membrane. The catalysed reaction is [(1-&gt;4)-alpha-D-galacturonosyl methyl ester](n) + n H2O = [(1-&gt;4)-alpha-D-galacturonosyl](n) + n methanol + n H(+). Its pathway is glycan metabolism; pectin degradation; 2-dehydro-3-deoxy-D-gluconate from pectin: step 1/5. Functionally, acts in the modification of cell walls via demethylesterification of cell wall pectin. In Arabidopsis thaliana (Mouse-ear cress), this protein is Putative pectinesterase/pectinesterase inhibitor 45 (PME45).